The following is an 89-amino-acid chain: Small ribosomal subunit protein uS15 (89 aa).

Belongs to the universal ribosomal protein uS15 family. In terms of assembly, part of the 30S ribosomal subunit. Forms a bridge to the 50S subunit in the 70S ribosome, contacting the 23S rRNA.

One of the primary rRNA binding proteins, it binds directly to 16S rRNA where it helps nucleate assembly of the platform of the 30S subunit by binding and bridging several RNA helices of the 16S rRNA. Its function is as follows. Forms an intersubunit bridge (bridge B4) with the 23S rRNA of the 50S subunit in the ribosome. This is Small ribosomal subunit protein uS15 from Treponema denticola (strain ATCC 35405 / DSM 14222 / CIP 103919 / JCM 8153 / KCTC 15104).